Here is a 122-residue protein sequence, read N- to C-terminus: Fluoride-specific ion channel FluC 2 (122 aa).

The next 4 helical transmembrane spans lie at 1–21 (MAWLYVGCGGIAGTLARFLLS), 33–53 (PLGTLFVNLSGAFLLGLLLAL), 62–82 (VTLALGTGFVGAYTTFSTFTY), and 102–122 (GSILGGLLLAWLGWLAAGSLF). Gly72 and Thr75 together coordinate Na(+).

It belongs to the fluoride channel Fluc/FEX (TC 1.A.43) family.

The protein localises to the cell membrane. The enzyme catalyses fluoride(in) = fluoride(out). With respect to regulation, na(+) is not transported, but it plays an essential structural role and its presence is essential for fluoride channel function. Fluoride-specific ion channel. Important for reducing fluoride concentration in the cell, thus reducing its toxicity. This chain is Fluoride-specific ion channel FluC 2, found in Moorella thermoacetica (strain ATCC 39073 / JCM 9320).